Here is a 408-residue protein sequence, read N- to C-terminus: Bifunctional polynucleotide phosphatase/kinase (408 aa).

Positions 1-38 (MSSKKRKSPPQESLTSYFEKSSKSSKKYGSQNKDSDSS) are disordered. Ser8 carries the phosphoserine modification. Polar residues-rich tracts occupy residues 10–19 (PQESLTSYFE) and 28–38 (YGSQNKDSDSS). ATP is bound at residue 263 to 270 (GFPSSGKS).

In the N-terminal section; belongs to the DNA 3' phosphatase family.

It localises to the nucleus. It carries out the reaction a 3'end (2'-deoxyribonucleotide 3'-phosphate)-DNA + H2O = a 3'-end 2'-deoxyribonucleotide-DNA + phosphate. The enzyme catalyses a 5'-end dephospho-2'-deoxyribonucleoside-DNA + ATP = a 5'-end 5'-phospho-2'-deoxyribonucleoside-DNA + ADP + H(+). Functionally, catalyzes the phosphorylation of DNA at 5'-hydroxyl termini and can dephosphorylate its 3'-phosphate termini. Has a role in the repair of breaks in single-stranded DNA. This is Bifunctional polynucleotide phosphatase/kinase (pnk1) from Schizosaccharomyces pombe (strain 972 / ATCC 24843) (Fission yeast).